Consider the following 38-residue polypeptide: Large ribosomal subunit protein bL36 (38 aa).

This sequence belongs to the bacterial ribosomal protein bL36 family.

This chain is Large ribosomal subunit protein bL36, found in Ectopseudomonas mendocina (strain ymp) (Pseudomonas mendocina).